The following is a 1938-amino-acid chain: Myosin-6 (1938 aa).

One can recognise a Myosin N-terminal SH3-like domain in the interval 32-81 (DIRTECFVPDDKEEYVKAKVVSREGGKVTAETENGKTVTIKEDQVMQQNP). Residues 85–780 (DKIEDMAMLT…LLGLLEEMRD (696 aa)) form the Myosin motor domain. Lys-129 bears the N6,N6,N6-trimethyllysine mark. 178–185 (GESGAGKT) serves as a coordination point for ATP. Position 379 is a phosphothreonine (Thr-379). Position 417 is a phosphoserine (Ser-417). Actin-binding stretches follow at residues 657–679 (LNKLMTNLKTTHPHFVRCIIPNE) and 759–773 (KFGHTKVFFKAGLLG). Positions 783–812 (LSRIITRIQAQARGQLMRIEFKKIVERRDA) constitute an IQ domain. Calmodulin-binding stretches follow at residues 790–807 (IQAQARGQLMRIEFKKIV) and 816–833 (IQWNIRAFMGVKNWPWMK). Residues 842–1938 (LKSAETEKEM…IGAKKMHDEE (1097 aa)) are a coiled coil. Residues Ser-1090 and Ser-1139 each carry the phosphoserine modification. Phosphotyrosine is present on Tyr-1261. Ser-1271 bears the Phosphoserine mark. Phosphothreonine is present on residues Thr-1277 and Thr-1284. Ser-1309 carries the phosphoserine modification. The residue at position 1310 (Tyr-1310) is a Phosphotyrosine. Thr-1311 carries the post-translational modification Phosphothreonine. Position 1512 is a phosphoserine (Ser-1512). A Phosphothreonine modification is found at Thr-1515. The disordered stretch occupies residues 1909-1938 (EERADIAESQVNKLRAKSRDIGAKKMHDEE). Basic and acidic residues predominate over residues 1925 to 1938 (KSRDIGAKKMHDEE).

This sequence belongs to the TRAFAC class myosin-kinesin ATPase superfamily. Myosin family. Muscle myosin is a hexameric protein that consists of 2 heavy chain subunits (MHC), 2 alkali light chain subunits (MLC) and 2 regulatory light chain subunits (MLC-2).

The protein resides in the cytoplasm. The protein localises to the myofibril. Functionally, muscle contraction. The protein is Myosin-6 (Myh6) of Mus musculus (Mouse).